The following is a 422-amino-acid chain: 3-carboxy-cis,cis-muconate cycloisomerase (422 aa).

It belongs to the class-II fumarase/aspartase family. As to quaternary structure, homotetramer.

The protein localises to the cytoplasm. The catalysed reaction is 2-(carboxymethyl)-5-oxo-2,5-dihydro-2-furoate = 3-carboxy-cis,cis-muconate + H(+). It participates in aromatic compound metabolism; beta-ketoadipate pathway; 5-oxo-4,5-dihydro-2-furylacetate from 3-carboxy-cis,cis-muconate: step 1/2. In terms of biological role, catalyzes an anti cycloisomerization. The polypeptide is 3-carboxy-cis,cis-muconate cycloisomerase (pcaB) (Pseudomonas putida (Arthrobacter siderocapsulatus)).